The chain runs to 972 residues: Cycloisomaltooligosaccharide glucanotransferase (972 aa).

Residues 1-38 form the signal peptide; the sequence is MVRFMYALRKRRLSLLLAMSLLVMCVASVVSPPPQALA. CBM6 domains lie at 421–546 and 748–871; these read TRYE…LTLG and DIYE…LDLD.

It belongs to the glycosyl hydrolase 66 family. In terms of assembly, monomer.

It carries out the reaction cyclizes part of a (1-&gt;6)-alpha-D-glucan chain by formation of a (1-&gt;6)-alpha-D-glucosidic bond.. Its function is as follows. Produces cycloisomaltooligosaccharide from dextran containing 7, 8 or 9 glucose units. The enzyme is specific for (1-&gt;6)-alpha-D-glucans (dextrans) and, without activity toward (1-&gt;4)-alpha-D-glucans, such as amylose. It also has no activity on oligosaccharides, such as amylopectin and pullulan, containing (1-&gt;6)-alpha-D-glucosidic linkages at branch points. This is Cycloisomaltooligosaccharide glucanotransferase from Niallia circulans (Bacillus circulans).